Consider the following 575-residue polypeptide: 5-aminolevulinate synthase, mitochondrial (575 aa).

The transit peptide at 1-55 (MESITRVSMSVCPFVKSSSAQALRQLSKNSALTSQARQCPFMGAALNAKESTRSY) directs the protein to the mitochondrion. Arg-124, Ser-237, and Lys-256 together coordinate substrate. The pyridoxal 5'-phosphate site is built by Ser-289, His-317, and Thr-361. Residue Lys-364 is part of the active site. Residue Lys-364 is modified to N6-(pyridoxal phosphate)lysine. Residues Thr-393 and Thr-394 each contribute to the pyridoxal 5'-phosphate site. Substrate is bound at residue Thr-479.

It belongs to the class-II pyridoxal-phosphate-dependent aminotransferase family. As to quaternary structure, homodimer. The cofactor is pyridoxal 5'-phosphate.

Its subcellular location is the mitochondrion matrix. It catalyses the reaction succinyl-CoA + glycine + H(+) = 5-aminolevulinate + CO2 + CoA. Its pathway is porphyrin-containing compound metabolism; protoporphyrin-IX biosynthesis; 5-aminolevulinate from glycine: step 1/1. Catalyzes the synthesis of 5-aminolevulinate (ALA) from succinyl-CoA and glycine, the first and rate-limiting step in heme biosynthesis. The polypeptide is 5-aminolevulinate synthase, mitochondrial (HEM1) (Debaryomyces hansenii (strain ATCC 36239 / CBS 767 / BCRC 21394 / JCM 1990 / NBRC 0083 / IGC 2968) (Yeast)).